We begin with the raw amino-acid sequence, 270 residues long: Checkpoint signal transducer rad25 (270 aa).

Phosphoserine is present on residues S234 and S253. The segment at Q240 to A270 is disordered. Positions E254 to A270 are enriched in basic and acidic residues.

Belongs to the 14-3-3 family. As to quaternary structure, interacts with rad24. Interacts with byr2.

The protein localises to the cytoplasm. Functionally, acts in cell cycle and stress checkpoint signaling by sequestering signal transducers regulated by the checkpoints. Required for the DNA damage checkpoint that ensures that DNA damage is repaired before mitosis is attempted. Sequesters byr2 in the cytoplasm to prevent its translocation to the plasma membrane. In Schizosaccharomyces pombe (strain 972 / ATCC 24843) (Fission yeast), this protein is Checkpoint signal transducer rad25.